We begin with the raw amino-acid sequence, 253 residues long: Eukaryotic initiation factor 4A-6 (253 aa).

Residues 1 to 82 (HVVVGTPGRV…RKFMNKPVRI (82 aa)) enclose the Helicase ATP-binding domain. A DEAD box motif is present at residues 30–33 (DEAD). The 161-residue stretch at 93 to 253 (GIKQFYVNVD…EELPANVADL (161 aa)) folds into the Helicase C-terminal domain.

This sequence belongs to the DEAD box helicase family. eIF4A subfamily. As to quaternary structure, eIF4F is a multi-subunit complex, the composition of which varies with external and internal environmental conditions. It is composed of at least EIF4A, EIF4E and EIF4G.

The catalysed reaction is ATP + H2O = ADP + phosphate + H(+). Its function is as follows. ATP-dependent RNA helicase which is a subunit of the eIF4F complex involved in cap recognition and is required for mRNA binding to ribosome. In the current model of translation initiation, eIF4A unwinds RNA secondary structures in the 5'-UTR of mRNAs which is necessary to allow efficient binding of the small ribosomal subunit, and subsequent scanning for the initiator codon. The protein is Eukaryotic initiation factor 4A-6 of Nicotiana tabacum (Common tobacco).